A 186-amino-acid chain; its full sequence is MKGSSEHGETSKAAPLGRGGVSKGVSVLDLILRFIAIIGTLASAIAMGTTNETLPFFTQFIRFKAQYSDLPTLTFFVVANSIVCAYLILSLPLSIVHIIRSRAKYSRLLLIFLDAAMLALVTAGASAAAAIVYLAHKGNVRANWLAICQQFDSFCERISGSLIGSFGAMVMLILLILLSAIALARR.

Topologically, residues 1-26 are cytoplasmic; it reads MKGSSEHGETSKAAPLGRGGVSKGVS. Residues 27–47 form a helical membrane-spanning segment; that stretch reads VLDLILRFIAIIGTLASAIAM. Residues 48–74 are Extracellular-facing; that stretch reads GTTNETLPFFTQFIRFKAQYSDLPTLT. The N-linked (GlcNAc...) asparagine glycan is linked to N51. A helical transmembrane segment spans residues 75-95; it reads FFVVANSIVCAYLILSLPLSI. Residues 96-107 are Cytoplasmic-facing; it reads VHIIRSRAKYSR. Residues 108–128 form a helical membrane-spanning segment; the sequence is LLLIFLDAAMLALVTAGASAA. Residues 129–161 are Extracellular-facing; sequence AAIVYLAHKGNVRANWLAICQQFDSFCERISGS. Residues 162–182 form a helical membrane-spanning segment; sequence LIGSFGAMVMLILLILLSAIA. Residues 183 to 186 lie on the Cytoplasmic side of the membrane; the sequence is LARR.

This sequence belongs to the Casparian strip membrane proteins (CASP) family. Homodimer and heterodimers.

The protein resides in the cell membrane. Its function is as follows. Regulates membrane-cell wall junctions and localized cell wall deposition. Required for establishment of the Casparian strip membrane domain (CSD) and the subsequent formation of Casparian strips, a cell wall modification of the root endodermis that determines an apoplastic barrier between the intraorganismal apoplasm and the extraorganismal apoplasm and prevents lateral diffusion. The chain is Casparian strip membrane protein 3 from Sorghum bicolor (Sorghum).